A 208-amino-acid chain; its full sequence is Inactive ribonuclease-like protein 10 (208 aa).

The N-terminal stretch at 1–24 (MKVTLVHLLFMMLLLLLGLGLGLG) is a signal peptide. N-linked (GlcNAc...) asparagine glycosylation is found at Asn-125 and Asn-147.

It belongs to the pancreatic ribonuclease family. Post-translationally, the N-terminus is blocked. Glycosylated. As to expression, male-specific expression in proximal caput of the epididymis (at protein level).

The protein resides in the secreted. Secreted proximal epididymal protein required for post-testicular sperm maturation and male fertility. May be involved in sperm adhesion to the egg zona pellucida. Does not have ribonuclease activity. The chain is Inactive ribonuclease-like protein 10 (Rnase10) from Mus musculus (Mouse).